The sequence spans 349 residues: Holliday junction branch migration complex subunit RuvB (349 aa).

The interval 1 to 185 (MSQEKERLIS…FGSIFRLDFY (185 aa)) is large ATPase domain (RuvB-L). ATP is bound by residues leucine 24, arginine 25, glycine 66, lysine 69, threonine 70, threonine 71, 132-134 (EDY), arginine 175, tyrosine 185, and arginine 222. Position 70 (threonine 70) interacts with Mg(2+). Positions 186–256 (DEEAIHDIVR…IAAESLACLE (71 aa)) are small ATPAse domain (RuvB-S). Residues 259-349 (KLGLDEIDHK…QQGLWTENGS (91 aa)) form a head domain (RuvB-H) region. Positions 314 and 319 each coordinate DNA.

Belongs to the RuvB family. In terms of assembly, homohexamer. Forms an RuvA(8)-RuvB(12)-Holliday junction (HJ) complex. HJ DNA is sandwiched between 2 RuvA tetramers; dsDNA enters through RuvA and exits via RuvB. An RuvB hexamer assembles on each DNA strand where it exits the tetramer. Each RuvB hexamer is contacted by two RuvA subunits (via domain III) on 2 adjacent RuvB subunits; this complex drives branch migration. In the full resolvosome a probable DNA-RuvA(4)-RuvB(12)-RuvC(2) complex forms which resolves the HJ.

It is found in the cytoplasm. It carries out the reaction ATP + H2O = ADP + phosphate + H(+). In terms of biological role, the RuvA-RuvB-RuvC complex processes Holliday junction (HJ) DNA during genetic recombination and DNA repair, while the RuvA-RuvB complex plays an important role in the rescue of blocked DNA replication forks via replication fork reversal (RFR). RuvA specifically binds to HJ cruciform DNA, conferring on it an open structure. The RuvB hexamer acts as an ATP-dependent pump, pulling dsDNA into and through the RuvAB complex. RuvB forms 2 homohexamers on either side of HJ DNA bound by 1 or 2 RuvA tetramers; 4 subunits per hexamer contact DNA at a time. Coordinated motions by a converter formed by DNA-disengaged RuvB subunits stimulates ATP hydrolysis and nucleotide exchange. Immobilization of the converter enables RuvB to convert the ATP-contained energy into a lever motion, pulling 2 nucleotides of DNA out of the RuvA tetramer per ATP hydrolyzed, thus driving DNA branch migration. The RuvB motors rotate together with the DNA substrate, which together with the progressing nucleotide cycle form the mechanistic basis for DNA recombination by continuous HJ branch migration. Branch migration allows RuvC to scan DNA until it finds its consensus sequence, where it cleaves and resolves cruciform DNA. The polypeptide is Holliday junction branch migration complex subunit RuvB (Dehalococcoides mccartyi (strain CBDB1)).